Reading from the N-terminus, the 730-residue chain is Stonin-1 (730 aa).

Disordered regions lie at residues 1-26 (MYST…KRKD), 38-83 (NGLK…PLST), and 132-159 (SPHV…AGPQ). Low complexity-rich tracts occupy residues 54–65 (PSSASSTPLSSP) and 132–143 (SPHVSLPSSHSH). In terms of domain architecture, SHD spans 269 to 402 (GWSFMLRIPE…KLPATAKPKN (134 aa)). The MHD domain maps to 407–710 (EQEICLDIQD…ACYNIQVEIE (304 aa)).

It belongs to the Stoned B family.

The protein localises to the cytoplasm. It localises to the membrane. Functionally, may be involved in the endocytic machinery. In Mus musculus (Mouse), this protein is Stonin-1 (Ston1).